Reading from the N-terminus, the 178-residue chain is uncharacterized protein (178 aa).

The next 5 membrane-spanning stretches (helical) occupy residues 1–21 (MISI…YGGG), 47–67 (MLAL…AYVG), 75–95 (GFLI…IVLL), 117–137 (VIAV…IKAI), and 158–178 (MHPA…IPYL).

This sequence belongs to the chromate ion transporter (CHR) (TC 2.A.51) family.

Its subcellular location is the cell membrane. This is an uncharacterized protein from Bacillus subtilis (strain 168).